The following is a 490-amino-acid chain: Glutamate--tRNA ligase 2 (490 aa).

The 'HIGH' region motif lies at 33–43 (PSPTGYLHIGG). Residues 262-266 (KLSKR) carry the 'KMSKS' region motif. Residue Lys-265 participates in ATP binding.

It belongs to the class-I aminoacyl-tRNA synthetase family. Glutamate--tRNA ligase type 1 subfamily. As to quaternary structure, monomer.

The protein localises to the cytoplasm. It carries out the reaction tRNA(Glu) + L-glutamate + ATP = L-glutamyl-tRNA(Glu) + AMP + diphosphate. Catalyzes the attachment of glutamate to tRNA(Glu) in a two-step reaction: glutamate is first activated by ATP to form Glu-AMP and then transferred to the acceptor end of tRNA(Glu). This Parvibaculum lavamentivorans (strain DS-1 / DSM 13023 / NCIMB 13966) protein is Glutamate--tRNA ligase 2.